The sequence spans 329 residues: Calcium homeostasis modulator protein (329 aa).

The Cytoplasmic segment spans residues 1 to 14; it reads MTTSINSVVTVFQN. Residues 15 to 35 traverse the membrane as a helical segment; sequence VFTNHGSTLLNGILIATTVGG. The Extracellular portion of the chain corresponds to 36–53; it reads QSLVRKLTFSCPCAYPLN. The chain crosses the membrane as a helical span at residues 54–74; the sequence is IYHSLVFMFGPTAALLLIGIT. The Cytoplasmic portion of the chain corresponds to 75-103; the sequence is VNSTTWKLAHGFFFRVRDTRHSWKTTCVS. The chain crosses the membrane as a helical span at residues 104–124; it reads WIEVLIQSSVAPIAWLFVVFL. Over 125–191 the chain is Extracellular; that stretch reads DGGYYRCYRS…DASYLEAESQ (67 aa). Residue Asn148 is glycosylated (N-linked (GlcNAc...) asparagine). The helical transmembrane segment at 192–212 threads the bilayer; the sequence is IYAWGLLLFSGVAAFLVITCN. Residues 213 to 329 lie on the Cytoplasmic side of the membrane; the sequence is RMCDKYTLVQ…QIIVDETKED (117 aa).

This sequence belongs to the CALHM family. As to expression, expressed in head and body wall muscles, IL2, ASG, ASI, ASJ, PHA and PHB sensory neurons, and spermatheca.

The protein resides in the cell membrane. Functionally, pore-forming subunit of a voltage-gated ion channel. Permeable to monovalent cations, divalent cations and anions with selectivity Ca(2+) &gt; Mg(2+) &gt; Na(+) = K(+) &gt; Cl(-). Acts both as a voltage-gated and calcium-activated ion channel. Required for normal locomotion. In Caenorhabditis elegans, this protein is Calcium homeostasis modulator protein.